A 231-amino-acid polypeptide reads, in one-letter code: 2-C-methyl-D-erythritol 4-phosphate cytidylyltransferase (231 aa).

It belongs to the IspD/TarI cytidylyltransferase family. IspD subfamily.

The catalysed reaction is 2-C-methyl-D-erythritol 4-phosphate + CTP + H(+) = 4-CDP-2-C-methyl-D-erythritol + diphosphate. Its pathway is isoprenoid biosynthesis; isopentenyl diphosphate biosynthesis via DXP pathway; isopentenyl diphosphate from 1-deoxy-D-xylulose 5-phosphate: step 2/6. In terms of biological role, catalyzes the formation of 4-diphosphocytidyl-2-C-methyl-D-erythritol from CTP and 2-C-methyl-D-erythritol 4-phosphate (MEP). The protein is 2-C-methyl-D-erythritol 4-phosphate cytidylyltransferase of Xylella fastidiosa (strain M23).